We begin with the raw amino-acid sequence, 148 residues long: WAP four-disulfide core domain protein 6B (148 aa).

Residues 1–35 (MPPNRLLLPKMRLWGLLPFLVPFILLWSIQEPALA) form the signal peptide. The WAP domain maps to 37 to 84 (GVFIRTCPKYNKIKCDFEERNQCLRHRECPGEERCCLFACGRKCLDLS). 7 disulfides stabilise this stretch: Cys43–Cys72, Cys51–Cys76, Cys59–Cys71, Cys65–Cys80, Cys88–Cys138, Cys97–Cys121, and Cys113–Cys134. Positions 88–138 (CSLPQDAGPCLAYLPRWWYNQDTKLCIEFIYGGCQGNPNNFESKAVCTSIC) constitute a BPTI/Kunitz inhibitor domain.

Its subcellular location is the secreted. The protein is WAP four-disulfide core domain protein 6B (Wfdc6b) of Mus musculus (Mouse).